Here is a 495-residue protein sequence, read N- to C-terminus: Averantin hydroxylase (495 aa).

The chain crosses the membrane as a helical span at residues 12 to 32 (ILLLIVLTVLTPPSLALYRLW). 2 N-linked (GlcNAc...) asparagine glycosylation sites follow: Asn258 and Asn289. Cys436 contributes to the heme binding site.

It belongs to the cytochrome P450 family. The cofactor is heme.

The protein resides in the membrane. It carries out the reaction (1'S)-averantin + reduced [NADPH--hemoprotein reductase] + O2 = (1'S,5'R)-5'-hydroxyaverantin + oxidized [NADPH--hemoprotein reductase] + H2O. It catalyses the reaction (1'S)-averantin + reduced [NADPH--hemoprotein reductase] + O2 = (1'S,5'S)-5'-hydroxyaverantin + oxidized [NADPH--hemoprotein reductase] + H2O + H(+). The protein operates within mycotoxin biosynthesis; aflatoxin biosynthesis. In terms of biological role, averantin hydroxylase; part of the gene cluster that mediates the biosynthesis of aflatoxins, a group of polyketide-derived furanocoumarins, and part of the most toxic and carcinogenic compounds among the known mycotoxins. The four major aflatoxins produced by A.parasiticus are aflatoxin B1 (AFB1), aflatoxin B2 (AFB2), aflatoxin G1 (AFG1) and aflatoxin G2 (AFG2). Within the aflatoxin pathway, the cytochrome P450 monooxygenase aflG catalyzes the hydroxylation of AVN to 5'hydroxyaverantin (HAVN). The biosynthesis of aflatoxins begins with the norsolorinic acid synthase aflC that combines a hexanoyl starter unit produced by the fatty acid synthase aflA/aflB and 7 malonyl-CoA extender units to synthesize the precursor NOR. The second step is the conversion of NOR to averantin and requires the norsolorinic acid ketoreductase aflD, which catalyzes the dehydration of norsolorinic acid to form (1'S)-averantin. The norsolorinic acid reductases aflE and aflF may also play a role in the conversion of NOR to AVN. The cytochrome P450 monooxygenase aflG then catalyzes the hydroxylation of AVN to 5'hydroxyaverantin (HAVN). The next step is performed by the 5'-hydroxyaverantin dehydrogenase aflH that transforms HAVN to 5'-oxoaverantin (OAVN) which is further converted to averufin (AVF) by aflK that plays a dual role in the pathway, as a 5'-oxoaverantin cyclase that mediates conversion of 5'-oxoaverantin, as well as a versicolorin B synthase in a later step in the pathway. The averufin oxidase aflI catalyzes the conversion of AVF to versiconal hemiacetal acetate (VHA). VHA is then the substrate for the versiconal hemiacetal acetate esterase aflJ to yield versiconal (VAL). Versicolorin B synthase aflK then converts VAL to versicolorin B (VERB) by closing the bisfuran ring of aflatoxin which is required for DNA-binding, thus giving to aflatoxin its activity as a mutagen. Then, the activity of the versicolorin B desaturase aflL leads to versicolorin A (VERA). A branch point starts from VERB since it can also be converted to dihydrodemethylsterigmatocystin (DMDHST), probably also by aflL, VERA being a precursor for aflatoxins B1 and G1, and DMDHST for aflatoxins B2 and G2. Next, the versicolorin reductase aflM and the cytochrome P450 monooxygenase aflN are involved in conversion of VERA to demethylsterigmatocystin (DMST). AflX and aflY seem also involved in this step, through probable aflX-mediated epoxide ring-opening step following versicolorin A oxidation and aflY-mediated Baeyer-Villiger oxidation required for the formation of the xanthone ring. The methyltransferase aflO then leads to the modification of DMST to sterigmatocystin (ST), and of DMDHST to dihydrosterigmatocystin (DHST). Both ST and DHST are then substrates of the O-methyltransferase aflP to yield O-methylsterigmatocystin (OMST) and dihydro-O-methylsterigmatocystin (DHOMST), respectively. Finally OMST is converted to aflatoxins B1 and G1, and DHOMST to aflatoxins B2 and G2, via the action of several enzymes including O-methylsterigmatocystin oxidoreductase aflQ, the cytochrome P450 monooxygenase aflU, but also the NADH-dependent flavin oxidoreductase nadA which is specifically required for the synthesis of AFG1. The protein is Averantin hydroxylase of Aspergillus parasiticus (strain ATCC 56775 / NRRL 5862 / SRRC 143 / SU-1).